The sequence spans 505 residues: Activin receptor type-1B (505 aa).

The N-terminal stretch at 1–23 (MAESAGASSFFPLVVLLLAGSGG) is a signal peptide. Topologically, residues 24–126 (SGPRGVQALL…EHPSMWGPVE (103 aa)) are extracellular. An N-linked (GlcNAc...) asparagine glycan is attached at asparagine 43. The helical transmembrane segment at 127–149 (LVGIIAGPVFLLFLIIIIVFLVI) threads the bilayer. Topologically, residues 150-505 (NYHQRVYHNR…QLSVQEDVKI (356 aa)) are cytoplasmic. The GS domain occupies 177-206 (KTLQDLVYDLSTSGSGSGLPLFVQRTVART). Positions 207 to 497 (IVLQEIIGKG…LRIKKTLSQL (291 aa)) constitute a Protein kinase domain. Residues 213–221 (IGKGRFGEV) and lysine 234 contribute to the ATP site. The active-site Proton acceptor is aspartate 335. Tyrosine 380 is subject to Phosphotyrosine.

The protein belongs to the protein kinase superfamily. TKL Ser/Thr protein kinase family. TGFB receptor subfamily. As to quaternary structure, forms an activin receptor complex with activin receptor type-2 (ACVR2A or ACVR2B). Part of a complex consisting of MAGI2/ARIP1, ACVR2A, ACVR1B and SMAD3. Interacts with SMAD2 and SMAD3. Interacts with SMAD7. Interacts with FKBP1A. Interacts with IGSF1. Interacts with CRIPTO. Interacts with TDP2. Interacts with TSC22D1/TSC-22. Requires Mg(2+) as cofactor. The cofactor is Mn(2+). In terms of processing, autophosphorylated. Phosphorylated by activin receptor type-2 (ACVR2A or ACVR2B) in response to activin-binding at serine and threonine residues in the GS domain. Phosphorylation of ACVR1B by activin receptor type-2 regulates association with SMAD7. Ubiquitinated. Level of ubiquitination is regulated by the SMAD7-SMURF1 complex. Post-translationally, ubiquitinated. In terms of tissue distribution, expressed in many tissues, most strongly in kidney, pancreas, brain, lung, and liver.

It localises to the cell membrane. It carries out the reaction L-threonyl-[receptor-protein] + ATP = O-phospho-L-threonyl-[receptor-protein] + ADP + H(+). The enzyme catalyses L-seryl-[receptor-protein] + ATP = O-phospho-L-seryl-[receptor-protein] + ADP + H(+). With respect to regulation, activin receptor type-2 (ACVR2A or ACVR2B) activates the type-1 receptor through phosphorylation of its regulatory GS domain. Functionally, transmembrane serine/threonine kinase activin type-1 receptor forming an activin receptor complex with activin receptor type-2 (ACVR2A or ACVR2B). Transduces the activin signal from the cell surface to the cytoplasm and is thus regulating a many physiological and pathological processes including neuronal differentiation and neuronal survival, hair follicle development and cycling, FSH production by the pituitary gland, wound healing, extracellular matrix production, immunosuppression and carcinogenesis. Activin is also thought to have a paracrine or autocrine role in follicular development in the ovary. Within the receptor complex, type-2 receptors (ACVR2A and/or ACVR2B) act as a primary activin receptors whereas the type-1 receptors like ACVR1B act as downstream transducers of activin signals. Activin binds to type-2 receptor at the plasma membrane and activates its serine-threonine kinase. The activated receptor type-2 then phosphorylates and activates the type-1 receptor such as ACVR1B. Once activated, the type-1 receptor binds and phosphorylates the SMAD proteins SMAD2 and SMAD3, on serine residues of the C-terminal tail. Soon after their association with the activin receptor and subsequent phosphorylation, SMAD2 and SMAD3 are released into the cytoplasm where they interact with the common partner SMAD4. This SMAD complex translocates into the nucleus where it mediates activin-induced transcription. Inhibitory SMAD7, which is recruited to ACVR1B through FKBP1A, can prevent the association of SMAD2 and SMAD3 with the activin receptor complex, thereby blocking the activin signal. Activin signal transduction is also antagonized by the binding to the receptor of inhibin-B via the IGSF1 inhibin coreceptor. ACVR1B also phosphorylates TDP2. The polypeptide is Activin receptor type-1B (ACVR1B) (Homo sapiens (Human)).